The following is a 129-amino-acid chain: Follitropin subunit beta (129 aa).

The first 20 residues, 1 to 20 (MKSVQFCFLFCCWRAICCRS), serve as a signal peptide directing secretion. Cystine bridges form between Cys-21/Cys-69, Cys-35/Cys-84, Cys-38/Cys-122, Cys-46/Cys-100, Cys-50/Cys-102, and Cys-105/Cys-112. N-linked (GlcNAc...) asparagine glycosylation is found at Asn-25 and Asn-42.

This sequence belongs to the glycoprotein hormones subunit beta family. Heterodimer. The active follitropin is a heterodimer composed of an alpha chain/CGA shared with other hormones and a unique beta chain/FSHB shown here.

It is found in the secreted. Its function is as follows. Together with the alpha chain CGA constitutes follitropin, the follicle-stimulating hormone, and provides its biological specificity to the hormone heterodimer. Binds FSHR, a G protein-coupled receptor, on target cells to activate downstream signaling pathways. Follitropin is involved in follicle development and spermatogenesis in reproductive organs. In Bubalus bubalis (Domestic water buffalo), this protein is Follitropin subunit beta (FSHB).